The sequence spans 950 residues: Translation initiation factor IF-2 (950 aa).

4 stretches are compositionally biased toward basic and acidic residues: residues 128-156 (KPKV…KVEA), 165-186 (AEVK…EKKK), 200-234 (KRAE…DNRR), and 291-312 (NRRD…DGNR). The disordered stretch occupies residues 128–352 (KPKVAEPVKK…YQNNQSSNVP (225 aa)). Polar residues-rich tracts occupy residues 322 to 336 (NRNQ…NWNQ) and 343 to 352 (YQNNQSSNVP). Residues 448–619 (ERPAVVTIMG…LLVAEVQELK (172 aa)) enclose the tr-type G domain. Residues 457-464 (GHVDHGKT) are G1. 457–464 (GHVDHGKT) is a GTP binding site. Positions 482 to 486 (GITQH) are G2. The tract at residues 503–506 (DTPG) is G3. GTP-binding positions include 503-507 (DTPGH) and 557-560 (NKLD). A G4 region spans residues 557–560 (NKLD). Residues 595-597 (SAK) form a G5 region.

It belongs to the TRAFAC class translation factor GTPase superfamily. Classic translation factor GTPase family. IF-2 subfamily.

Its subcellular location is the cytoplasm. In terms of biological role, one of the essential components for the initiation of protein synthesis. Protects formylmethionyl-tRNA from spontaneous hydrolysis and promotes its binding to the 30S ribosomal subunits. Also involved in the hydrolysis of GTP during the formation of the 70S ribosomal complex. This is Translation initiation factor IF-2 (infB) from Lactococcus lactis subsp. cremoris (Streptococcus cremoris).